Consider the following 168-residue polypeptide: MAAQSKQAKPSGKQGGKKIIATNRKARHNYSIIEVFEAGVALQGTEVKSLRERHASLVDAFATVDDGEVWLRNLHIPEYLHGTWTNHEPRRNRKLLLHRRQIDTLFGKIREGNFALVPLSMYFLDGKVKVELALARGKHAHDKRQDLARRDAQREVIRELGRRAKGMG.

The disordered stretch occupies residues 1–20; it reads MAAQSKQAKPSGKQGGKKII.

Belongs to the SmpB family.

Its subcellular location is the cytoplasm. Its function is as follows. Required for rescue of stalled ribosomes mediated by trans-translation. Binds to transfer-messenger RNA (tmRNA), required for stable association of tmRNA with ribosomes. tmRNA and SmpB together mimic tRNA shape, replacing the anticodon stem-loop with SmpB. tmRNA is encoded by the ssrA gene; the 2 termini fold to resemble tRNA(Ala) and it encodes a 'tag peptide', a short internal open reading frame. During trans-translation Ala-aminoacylated tmRNA acts like a tRNA, entering the A-site of stalled ribosomes, displacing the stalled mRNA. The ribosome then switches to translate the ORF on the tmRNA; the nascent peptide is terminated with the 'tag peptide' encoded by the tmRNA and targeted for degradation. The ribosome is freed to recommence translation, which seems to be the essential function of trans-translation. This Mycobacterium ulcerans (strain Agy99) protein is SsrA-binding protein.